Reading from the N-terminus, the 436-residue chain is UPF0597 protein YhaM (436 aa).

This sequence belongs to the UPF0597 family.

This chain is UPF0597 protein YhaM, found in Shigella sonnei (strain Ss046).